The primary structure comprises 106 residues: ATP-dependent Clp protease adapter protein ClpS (106 aa).

Over residues 1 to 14 (MTDKAGDWQEHGPQ) the composition is skewed to basic and acidic residues. The disordered stretch occupies residues 1–21 (MTDKAGDWQEHGPQVEEAPPQ).

This sequence belongs to the ClpS family. In terms of assembly, binds to the N-terminal domain of the chaperone ClpA.

Its function is as follows. Involved in the modulation of the specificity of the ClpAP-mediated ATP-dependent protein degradation. The protein is ATP-dependent Clp protease adapter protein ClpS of Alkalilimnicola ehrlichii (strain ATCC BAA-1101 / DSM 17681 / MLHE-1).